The chain runs to 238 residues: 15,16-dihydrobiliverdin:ferredoxin oxidoreductase (238 aa).

The protein belongs to the HY2 family.

The enzyme catalyses 15,16-dihydrobiliverdin + oxidized 2[4Fe-4S]-[ferredoxin] = biliverdin IXalpha + reduced 2[4Fe-4S]-[ferredoxin] + 2 H(+). Functionally, catalyzes the two-electron reduction of biliverdin IX-alpha at the C15 methine bridge. The polypeptide is 15,16-dihydrobiliverdin:ferredoxin oxidoreductase (Prochlorococcus marinus (strain NATL2A)).